The sequence spans 165 residues: Nascent polypeptide-associated complex subunit beta (165 aa).

2 disordered regions span residues 1–34 and 133–165; these read MDQAKLARMQASVRIGGKGTPRRKVKKVHKTSGA and QNMQKNQAGEKKDDDEDDIPDLVEGENFEKSVD. The span at 20 to 30 shows a compositional bias: basic residues; that stretch reads TPRRKVKKVHK. The 78-residue stretch at 33 to 110 folds into the NAC-A/B domain; the sequence is GADDKKLQAT…GEEKELTELV (78 aa). Positions 145 to 158 are enriched in acidic residues; sequence DDDEDDIPDLVEGE.

This sequence belongs to the NAC-beta family. As to quaternary structure, part of the nascent polypeptide-associated complex (NAC), consisting of egd2 and egd1. NAC associates with ribosomes via egd1.

The protein localises to the cytoplasm. It localises to the nucleus. Functionally, component of the nascent polypeptide-associated complex (NAC), a dynamic component of the ribosomal exit tunnel, protecting the emerging polypeptides from interaction with other cytoplasmic proteins to ensure appropriate nascent protein targeting. The NAC complex also promotes mitochondrial protein import by enhancing productive ribosome interactions with the outer mitochondrial membrane and blocks the inappropriate interaction of ribosomes translating non-secretory nascent polypeptides with translocation sites in the membrane of the endoplasmic reticulum. EGD1 may act as a transcription factor that exert a negative effect on the expression of several genes that are transcribed by RNA polymerase II. This chain is Nascent polypeptide-associated complex subunit beta (egd1), found in Emericella nidulans (strain FGSC A4 / ATCC 38163 / CBS 112.46 / NRRL 194 / M139) (Aspergillus nidulans).